The sequence spans 176 residues: Protein MAL2 (176 aa).

The Cytoplasmic segment spans residues 1–34; it reads MSAGGAPVPPPPNPAMSFPAPRVTLPAGPDILRT. Residues 31–175 form the MARVEL domain; sequence ILRTYSGAFV…SLGLALRRWR (145 aa). A helical membrane pass occupies residues 35–55; the sequence is YSGAFVCLEIVFGGLVWILVA. At 56–66 the chain is on the lumenal side; sequence SSNVPLPLLQG. Residues 67–87 form a helical membrane-spanning segment; sequence WVMFVSVTAFVCSLLFLGVFL. Over 88–102 the chain is Cytoplasmic; sequence SGVVTQINANWNFLD. A helical transmembrane segment spans residues 103–123; the sequence is FAYHFTVFVFYFGAFLLEAAT. Over 124-149 the chain is Lumenal; it reads TSLHDLRCNRTMTVQPLLSDNQYNIN. Residue Asn132 is glycosylated (N-linked (GlcNAc...) asparagine). A helical transmembrane segment spans residues 150–170; sequence VAATIFAFVTTACYGCSLGLA. Residues 171–176 are Cytoplasmic-facing; it reads LRRWRP.

This sequence belongs to the MAL family. Interacts with TPD52L2.

Its subcellular location is the cell membrane. It is found in the apical cell membrane. In terms of biological role, member of the machinery of polarized transport. Required for the indirect transcytotic route at the step of the egress of the transcytosing cargo from perinuclear endosomes in order for it to travel to the apical surface via a raft-dependent pathway. The chain is Protein MAL2 (MAL2) from Bos taurus (Bovine).